Consider the following 378-residue polypeptide: Beta-1,3-galactosyltransferase 4 (378 aa).

Topologically, residues 1–8 are cytoplasmic; it reads MQLRLFRR. Residues 9 to 19 form a helical; Signal-anchor for type II membrane protein membrane-spanning segment; sequence LLLAALLLVIV. The Lumenal segment spans residues 20-378; sequence WTLFGPSGLG…RCRAIAWLQS (359 aa). Asparagine 149 carries an N-linked (GlcNAc...) asparagine glycan.

This sequence belongs to the glycosyltransferase 31 family. As to expression, highly expressed in heart, skeletal muscle and pancreas and, to a lesser extent, in brain, placenta, kidney, liver and lung.

It localises to the golgi apparatus membrane. The catalysed reaction is a ganglioside GM2 (d18:1(4E)) + UDP-alpha-D-galactose = a ganglioside GM1 (d18:1(4E)) + UDP + H(+). The enzyme catalyses a ganglioside GM2 + UDP-alpha-D-galactose = a ganglioside GM1 + UDP + H(+). It carries out the reaction a ganglioside GD2 (d18:1(4E)) + UDP-alpha-D-galactose = a ganglioside GD1b (d18:1(4E)) + UDP + H(+). It catalyses the reaction a ganglioside GA2 (d18:1(4E)) + UDP-alpha-D-galactose = a ganglioside GA1 (d18:1(4E)) + UDP + H(+). Its pathway is protein modification; protein glycosylation. Its function is as follows. Involved in GM1/GD1B/GA1 ganglioside biosynthesis. The polypeptide is Beta-1,3-galactosyltransferase 4 (Homo sapiens (Human)).